The chain runs to 89 residues: DNA-directed RNA polymerase subunit Rpo6 (89 aa).

Belongs to the archaeal Rpo6/eukaryotic RPB6 RNA polymerase subunit family. In terms of assembly, part of the 13-subunit RNA polymerase complex.

Its subcellular location is the cytoplasm. The enzyme catalyses RNA(n) + a ribonucleoside 5'-triphosphate = RNA(n+1) + diphosphate. Functionally, DNA-dependent RNA polymerase (RNAP) catalyzes the transcription of DNA into RNA using the four ribonucleoside triphosphates as substrates. Reconstitution experiments show this subunit is required for basic activity. In Sulfolobus acidocaldarius (strain ATCC 33909 / DSM 639 / JCM 8929 / NBRC 15157 / NCIMB 11770), this protein is DNA-directed RNA polymerase subunit Rpo6.